Here is a 115-residue protein sequence, read N- to C-terminus: Immunoglobulin kappa variable 5-2 (115 aa).

An N-terminal signal peptide occupies residues 1–20; it reads MGSQVHLLSFLLLWISDTRA. The interval 21–43 is framework-1; the sequence is ETTLTQSPAFMSATPGDKVNISC. The region spanning 22 to 115 is the Ig-like domain; the sequence is TTLTQSPAFM…YFCLQHDNFP (94 aa). Residue Asn-40 is glycosylated (N-linked (GlcNAc...) asparagine). Ser-42 is modified (phosphoserine). Cys-43 and Cys-108 are oxidised to a cystine. A complementarity-determining-1 region spans residues 44 to 54; that stretch reads KASQDIDDDMN. Residues 55–69 form a framework-2 region; sequence WYQQKPGEAAIFIIQ. The interval 70–76 is complementarity-determining-2; it reads EATTLVP. The tract at residues 77–108 is framework-3; it reads GIPPRFSGSGYGTDFTLTINNIESEDAAYYFC. Residues 109 to 115 form a complementarity-determining-3 region; that stretch reads LQHDNFP.

As to quaternary structure, immunoglobulins are composed of two identical heavy chains and two identical light chains; disulfide-linked.

Its subcellular location is the secreted. The protein resides in the cell membrane. In terms of biological role, v region of the variable domain of immunoglobulin light chains that participates in the antigen recognition. Immunoglobulins, also known as antibodies, are membrane-bound or secreted glycoproteins produced by B lymphocytes. In the recognition phase of humoral immunity, the membrane-bound immunoglobulins serve as receptors which, upon binding of a specific antigen, trigger the clonal expansion and differentiation of B lymphocytes into immunoglobulins-secreting plasma cells. Secreted immunoglobulins mediate the effector phase of humoral immunity, which results in the elimination of bound antigens. The antigen binding site is formed by the variable domain of one heavy chain, together with that of its associated light chain. Thus, each immunoglobulin has two antigen binding sites with remarkable affinity for a particular antigen. The variable domains are assembled by a process called V-(D)-J rearrangement and can then be subjected to somatic hypermutations which, after exposure to antigen and selection, allow affinity maturation for a particular antigen. This chain is Immunoglobulin kappa variable 5-2, found in Homo sapiens (Human).